A 442-amino-acid polypeptide reads, in one-letter code: Proline--tRNA ligase (442 aa).

This sequence belongs to the class-II aminoacyl-tRNA synthetase family. ProS type 2 subfamily. In terms of assembly, homodimer.

The protein localises to the cytoplasm. It catalyses the reaction tRNA(Pro) + L-proline + ATP = L-prolyl-tRNA(Pro) + AMP + diphosphate. In terms of biological role, catalyzes the attachment of proline to tRNA(Pro) in a two-step reaction: proline is first activated by ATP to form Pro-AMP and then transferred to the acceptor end of tRNA(Pro). In Brucella abortus (strain S19), this protein is Proline--tRNA ligase.